Consider the following 115-residue polypeptide: uncharacterized protein (115 aa).

The next 2 helical transmembrane spans lie at 11–31 (FLYL…LVWN) and 85–105 (GYII…YALI).

It to M.thermoautotrophicum MTH1706.

Its subcellular location is the cell membrane. This is an uncharacterized protein from Methanocaldococcus jannaschii (strain ATCC 43067 / DSM 2661 / JAL-1 / JCM 10045 / NBRC 100440) (Methanococcus jannaschii).